Here is a 697-residue protein sequence, read N- to C-terminus: Phenoloxidase 1 (697 aa).

A propeptide spans 1–101 (removed by PPAE1); sequence MSDMSGDVVE…PKHQEMATEV (101 aa). Residues histidine 217, histidine 221, and histidine 247 each contribute to the Cu cation site. Asparagine 260 and asparagine 313 each carry an N-linked (GlcNAc...) asparagine glycan. Glutamate 355 (proton acceptor) is an active-site residue. 3 residues coordinate Cu cation: histidine 370, histidine 374, and histidine 410. 2 N-linked (GlcNAc...) asparagine glycosylation sites follow: asparagine 498 and asparagine 552. Cystine bridges form between cysteine 587–cysteine 631 and cysteine 589–cysteine 638.

Belongs to the tyrosinase family. In terms of assembly, heterodimer. The cofactor is Cu(2+). Post-translationally, activated by the cleavage of the N-terminal propeptide by PPAE1. Expressed in hemocytes.

Its subcellular location is the secreted. It carries out the reaction L-tyrosine + O2 = L-dopaquinone + H2O. The catalysed reaction is 2 L-dopa + O2 = 2 L-dopaquinone + 2 H2O. Its activity is regulated as follows. Activated by a cationic detergent cetyl pyridinium chloride (CPC). Inhibited by phenyl thio-urea (PTU). Functionally, this is a copper-containing oxidase that functions in the formation of pigments such as melanins and other polyphenolic compounds. Catalyzes the rate-limiting conversions of tyrosine to DOPA, DOPA to DOPA-quinone and possibly 5,6 dihydroxyindole to indole-5'6 quinone. Catalyzes the oxidation of 4-methylcatechol. Binds to the surface of hemocytes and is involved in hemocyte melanization. The sequence is that of Phenoloxidase 1 from Spodoptera litura (Asian cotton leafworm).